A 130-amino-acid polypeptide reads, in one-letter code: Mitochondrial import protein 1 (130 aa).

Positions 1 to 41 (MSAEEISNPLAESGVTISSDSEQYSAPESASPQSPSSSSPA) are disordered. Residues 15–24 (VTISSDSEQY) show a composition bias toward polar residues. Low complexity predominate over residues 25–41 (SAPESASPQSPSSSSPA).

Belongs to the MIM1 family.

It localises to the mitochondrion outer membrane. In terms of biological role, required for the assembly of the TOM (translocase of outer membrane) receptor complex, which is responsible for the recognition and translocation of cytosolically synthesized mitochondrial preproteins. The chain is Mitochondrial import protein 1 from Neurospora crassa (strain ATCC 24698 / 74-OR23-1A / CBS 708.71 / DSM 1257 / FGSC 987).